The primary structure comprises 502 residues: Glycerol kinase (502 aa).

Thr14 is an ADP binding site. ATP-binding residues include Thr14, Thr15, and Ser16. Thr14 serves as a coordination point for sn-glycerol 3-phosphate. An ADP-binding site is contributed by Arg18. Sn-glycerol 3-phosphate contacts are provided by Arg84, Glu85, Tyr136, and Asp246. Glycerol contacts are provided by Arg84, Glu85, Tyr136, Asp246, and Gln247. Residues Thr268 and Gly311 each coordinate ADP. The ATP site is built by Thr268, Gly311, Gln315, and Gly412. ADP contacts are provided by Gly412 and Asn416.

It belongs to the FGGY kinase family. In terms of assembly, homotetramer and homodimer (in equilibrium). Heterodimer with EIIA-Glc. Binds 1 zinc ion per glycerol kinase EIIA-Glc dimer. The zinc ion is important for dimerization.

It carries out the reaction glycerol + ATP = sn-glycerol 3-phosphate + ADP + H(+). The protein operates within polyol metabolism; glycerol degradation via glycerol kinase pathway; sn-glycerol 3-phosphate from glycerol: step 1/1. Activity of this regulatory enzyme is affected by several metabolites. Allosterically and non-competitively inhibited by fructose 1,6-bisphosphate (FBP) and unphosphorylated phosphocarrier protein EIIA-Glc (III-Glc), an integral component of the bacterial phosphotransferase (PTS) system. In terms of biological role, key enzyme in the regulation of glycerol uptake and metabolism. Catalyzes the phosphorylation of glycerol to yield sn-glycerol 3-phosphate. This Escherichia coli O8 (strain IAI1) protein is Glycerol kinase.